Reading from the N-terminus, the 312-residue chain is 4-hydroxy-3-methylbut-2-enyl diphosphate reductase (312 aa).

C14 provides a ligand contact to [4Fe-4S] cluster. (2E)-4-hydroxy-3-methylbut-2-enyl diphosphate-binding residues include H43 and H76. Dimethylallyl diphosphate-binding residues include H43 and H76. Isopentenyl diphosphate-binding residues include H43 and H76. C98 is a binding site for [4Fe-4S] cluster. Residue H125 coordinates (2E)-4-hydroxy-3-methylbut-2-enyl diphosphate. H125 provides a ligand contact to dimethylallyl diphosphate. H125 provides a ligand contact to isopentenyl diphosphate. The active-site Proton donor is E127. T165 is a binding site for (2E)-4-hydroxy-3-methylbut-2-enyl diphosphate. C195 provides a ligand contact to [4Fe-4S] cluster. (2E)-4-hydroxy-3-methylbut-2-enyl diphosphate contacts are provided by S223, S224, N225, and S269. The dimethylallyl diphosphate site is built by S223, S224, N225, and S269. Isopentenyl diphosphate is bound by residues S223, S224, N225, and S269.

Belongs to the IspH family. The cofactor is [4Fe-4S] cluster.

It catalyses the reaction isopentenyl diphosphate + 2 oxidized [2Fe-2S]-[ferredoxin] + H2O = (2E)-4-hydroxy-3-methylbut-2-enyl diphosphate + 2 reduced [2Fe-2S]-[ferredoxin] + 2 H(+). The enzyme catalyses dimethylallyl diphosphate + 2 oxidized [2Fe-2S]-[ferredoxin] + H2O = (2E)-4-hydroxy-3-methylbut-2-enyl diphosphate + 2 reduced [2Fe-2S]-[ferredoxin] + 2 H(+). Its pathway is isoprenoid biosynthesis; dimethylallyl diphosphate biosynthesis; dimethylallyl diphosphate from (2E)-4-hydroxy-3-methylbutenyl diphosphate: step 1/1. The protein operates within isoprenoid biosynthesis; isopentenyl diphosphate biosynthesis via DXP pathway; isopentenyl diphosphate from 1-deoxy-D-xylulose 5-phosphate: step 6/6. In terms of biological role, catalyzes the conversion of 1-hydroxy-2-methyl-2-(E)-butenyl 4-diphosphate (HMBPP) into a mixture of isopentenyl diphosphate (IPP) and dimethylallyl diphosphate (DMAPP). Acts in the terminal step of the DOXP/MEP pathway for isoprenoid precursor biosynthesis. The chain is 4-hydroxy-3-methylbut-2-enyl diphosphate reductase from Leptospira interrogans serogroup Icterohaemorrhagiae serovar copenhageni (strain Fiocruz L1-130).